Reading from the N-terminus, the 245-residue chain is MARRRRRHRGPRRPRPPGPTGAVPTAQSQVTSTPNSEPVVRSAPAAGGPPPSCSLLLRQWLHVPESASDDDDDDDWPDSPPPEPAPEARPTAAAPRPRSPPPGAGPGGGANPSHPPSRPFRLPPRLALRLRVTAEHLARLRLRRAGGEGAPKPPATPATPATPATPATPATPARVRFSPHVRVRHLVVWASAARLARRGSWARERADRARFRRRVAEAEAVIGPCLGPEARARALARGAGPANSV.

Positions 1-15 (MARRRRRHRGPRRPR) are enriched in basic residues. The tract at residues 1 to 17 (MARRRRRHRGPRRPRPP) is required for nucleolar localization. Disordered stretches follow at residues 1 to 122 (MARR…PFRL) and 143 to 172 (RRAG…PATP). Polar residues predominate over residues 25 to 36 (TAQSQVTSTPNS). The span at 67–77 (ASDDDDDDDWP) shows a compositional bias: acidic residues. Pro residues-rich tracts occupy residues 78-87 (DSPPPEPAPE) and 113-122 (SHPPSRPFRL). Residues 122–131 (LPPRLALRLR) carry the Nuclear export signal motif. 6 tandem repeats follow at residues 155–157 (ATP), 158–160 (ATP), 161–163 (ATP), 164–166 (ATP), 167–169 (ATP), and 170–172 (ATP). The tract at residues 155–172 (ATPATPATPATPATPATP) is 6 X 3 AA tandem repeats of A-T-P. Over residues 158 to 172 (ATPATPATPATPATP) the composition is skewed to low complexity. The tract at residues 172–185 (PARVRFSPHVRVRH) is binding to PP1CA. Residues 172 to 185 (PARVRFSPHVRVRH) are interaction with host PPP1CA. Residues 187–245 (VVWASAARLARRGSWARERADRARFRRRVAEAEAVIGPCLGPEARARALARGAGPANSV) form an important for interferon resistance region. Residues 197 to 215 (RRGSWARERADRARFRRRV) carry the Bipartite nuclear localization signal motif. The interaction with host EIF2S1/EIF-2ALPHA stretch occupies residues 215 to 230 (VAEAEAVIGPCLGPEA).

Belongs to the PPP1R15 family. In terms of assembly, interacts with host PPP1CA to form a high-molecular-weight complex that dephosphorylates EIF2S1/eIF-2alpha. Interacts with host EIF2S1/eIF-2alpha; this interaction is crucial for the specific dephosphorylation of EIF2S1/eIF-2alpha by PPP1CA. Binds to proliferating cell nuclear antigen (PCNA), which may release host cells from growth arrest and facilitate viral replication. Interacts (via N-terminus) with host C1QBP and PRKCA. Interacts with protein UL31. Interacts with host TBK1. Interacts with host STING/TMEM173; this interaction inhibits the intracellular DNA sensing pathway. Interacts with host BECN1; this interaction modulates host autophagy.

It is found in the host cytoplasm. Its subcellular location is the host nucleus. The protein resides in the host nucleolus. The protein localises to the virion. Inhibits the establishment of the immune response and of the integrated stress response (ISR) in the infected cell. Plays essential roles in viral nuclear egress to mediate capsid transit across the nuclear membrane. Facilitates nuclear egress cooperatively with host C1QBP and protein kinase C/PKC to induce lamin A/C phosphorylation and subsequent reorganization. In turn, lamina disassembles and nuclear egress occurs. Recruits the serine/threonine protein phosphatase PPP1CA/PP1-alpha to dephosphorylate the translation initiation factor EIF2S1/eIF-2alpha, thereby couteracting the host shutoff of protein synthesis involving double-stranded RNA-dependent protein kinase EIF2AK2/PKR. In turn, controls host IRF3 activation and subsequently inhibits host interferon response. Controls the DNA sensing pathway by interacting with and inhibiting host STING/TMEM173. Also down-modulates the host MHC class II proteins cell surface expression. Acts as a neurovirulence factor that has a profound effect on the growth of the virus in central nervous system tissue, by interacting with host BECN1 and thereby antagonizing the host autophagy response. In Homo sapiens (Human), this protein is Neurovirulence factor ICP34.5 (RL1).